Here is a 186-residue protein sequence, read N- to C-terminus: Ribosome-recycling factor (186 aa).

Belongs to the RRF family.

Its subcellular location is the cytoplasm. Responsible for the release of ribosomes from messenger RNA at the termination of protein biosynthesis. May increase the efficiency of translation by recycling ribosomes from one round of translation to another. The protein is Ribosome-recycling factor of Bacteroides thetaiotaomicron (strain ATCC 29148 / DSM 2079 / JCM 5827 / CCUG 10774 / NCTC 10582 / VPI-5482 / E50).